Here is a 483-residue protein sequence, read N- to C-terminus: Glutamate mutase epsilon subunit (483 aa).

Arginine 66 lines the L-glutamate pocket. Glycine 68 is an adenosylcob(III)alamin binding site. Arginine 100 lines the L-glutamate pocket. Asparagine 123 contacts adenosylcob(III)alamin. L-glutamate is bound by residues 149–150 (RH), glutamate 171, and tyrosine 177. Residue proline 180 participates in adenosylcob(III)alamin binding. L-glutamate is bound at residue tyrosine 181. Adenosylcob(III)alamin is bound by residues phenylalanine 297, lysine 326, glutamate 330, and isoleucine 334.

It belongs to the methylaspartate mutase GlmE subunit family. As to quaternary structure, heterotetramer composed of 2 epsilon subunits (GlmE) and 2 sigma subunits (GlmS). GlmE exists as a homodimer and GlmS as a monomer. The cofactor is adenosylcob(III)alamin.

The enzyme catalyses (2S,3S)-3-methyl-L-aspartate = L-glutamate. The protein operates within amino-acid degradation; L-glutamate degradation via mesaconate pathway; acetate and pyruvate from L-glutamate: step 1/4. Competitively inhibited by (2S,4S)-4-fluoroglutamate, 2-methyleneglutarate, (2R,3RS)-3-fluoroglutamate and (S)-3-methylitaconate. In terms of biological role, catalyzes the carbon skeleton rearrangement of L-glutamate to L-threo-3-methylaspartate ((2S,3S)-3-methylaspartate). The sequence is that of Glutamate mutase epsilon subunit from Clostridium cochlearium.